The following is a 294-amino-acid chain: Putative cuticle collagen 145 (294 aa).

Residues 1–30 (MEKILVTFSTGAASIAVLAVLFTVPSLYNT) form the signal peptide. Over residues 100 to 112 (TCPPGPPGPPGQP) the composition is skewed to pro residues. 2 disordered regions span residues 100–133 (TCPPGPPGPPGQPGAPGTPGAPGPKGDDNTATFA) and 148–276 (PQGP…LPGN). Triple-helical region stretches follow at residues 102-127 (PPGPPGPPGQPGAPGTPGAPGPKGDD) and 148-277 (PQGP…PGND). Composition is skewed to low complexity over residues 164–194 (AGPDGQPGFPGQRGNDGFPGAPGAPGDNGQP) and 219–265 (APGA…DGQP). The Collagen-like domain occupies 218 to 276 (GAPGAPGNAGPAGPAGQDGFPGQDGAPGPAGPAGQDGFPGNAGSDGQPGAPGGPGLPGN).

It belongs to the cuticular collagen family. As to quaternary structure, collagen polypeptide chains are complexed within the cuticle by disulfide bonds and other types of covalent cross-links.

In terms of biological role, nematode cuticles are composed largely of collagen-like proteins. The cuticle functions both as an exoskeleton and as a barrier to protect the worm from its environment. The polypeptide is Putative cuticle collagen 145 (col-145) (Caenorhabditis elegans).